We begin with the raw amino-acid sequence, 269 residues long: Hydroxyethylthiazole kinase (269 aa).

Met45 lines the substrate pocket. The ATP site is built by Arg121 and Thr167. Gly194 lines the substrate pocket.

It belongs to the Thz kinase family. Mg(2+) is required as a cofactor.

The catalysed reaction is 5-(2-hydroxyethyl)-4-methylthiazole + ATP = 4-methyl-5-(2-phosphooxyethyl)-thiazole + ADP + H(+). It functions in the pathway cofactor biosynthesis; thiamine diphosphate biosynthesis; 4-methyl-5-(2-phosphoethyl)-thiazole from 5-(2-hydroxyethyl)-4-methylthiazole: step 1/1. Its function is as follows. Catalyzes the phosphorylation of the hydroxyl group of 4-methyl-5-beta-hydroxyethylthiazole (THZ). This chain is Hydroxyethylthiazole kinase, found in Bacillus cytotoxicus (strain DSM 22905 / CIP 110041 / 391-98 / NVH 391-98).